A 170-amino-acid polypeptide reads, in one-letter code: Cytochrome bc1 complex Rieske iron-sulfur subunit (170 aa).

The region spanning 63–153 (KAALMIIRLE…IGVNDEGYLE (91 aa)) is the Rieske domain. [2Fe-2S] cluster-binding residues include C96, H98, C115, and H118. C101 and C117 are joined by a disulfide.

In terms of assembly, the cytochrome bc1 complex is composed of a cytochrome b (QcrB), the Rieske iron-sulfur protein (QcrA) and a diheme cytochrome c (QcrC) subunit. Requires [2Fe-2S] cluster as cofactor.

It is found in the cell membrane. Its function is as follows. Iron-sulfur subunit of the cytochrome bc1 complex, an essential component of the respiratory electron transport chain required for ATP synthesis. The bc1 complex catalyzes the oxidation of menaquinol and the reduction of cytochrome c in the respiratory chain. The bc1 complex operates through a Q-cycle mechanism that couples electron transfer to generation of the proton gradient that drives ATP synthesis. This Streptomyces lividans protein is Cytochrome bc1 complex Rieske iron-sulfur subunit (qcrA).